A 125-amino-acid polypeptide reads, in one-letter code: Small ribosomal subunit protein uS12 (125 aa).

At D89 the chain carries 3-methylthioaspartic acid. Positions 104–125 (LQGVKDRKQSRSKYGSKRPKKA) are disordered. Residues 113–125 (SRSKYGSKRPKKA) show a composition bias toward basic residues.

The protein belongs to the universal ribosomal protein uS12 family. As to quaternary structure, part of the 30S ribosomal subunit. Contacts proteins S8 and S17. May interact with IF1 in the 30S initiation complex.

Functionally, with S4 and S5 plays an important role in translational accuracy. Its function is as follows. Interacts with and stabilizes bases of the 16S rRNA that are involved in tRNA selection in the A site and with the mRNA backbone. Located at the interface of the 30S and 50S subunits, it traverses the body of the 30S subunit contacting proteins on the other side and probably holding the rRNA structure together. The combined cluster of proteins S8, S12 and S17 appears to hold together the shoulder and platform of the 30S subunit. The chain is Small ribosomal subunit protein uS12 from Leptothrix cholodnii (strain ATCC 51168 / LMG 8142 / SP-6) (Leptothrix discophora (strain SP-6)).